The following is a 505-amino-acid chain: Probable cytosol aminopeptidase (505 aa).

Mn(2+) contacts are provided by Lys-269 and Asp-274. The active site involves Lys-281. Asp-292, Asp-351, and Glu-353 together coordinate Mn(2+). Residue Arg-355 is part of the active site.

Belongs to the peptidase M17 family. The cofactor is Mn(2+).

Its subcellular location is the cytoplasm. It catalyses the reaction Release of an N-terminal amino acid, Xaa-|-Yaa-, in which Xaa is preferably Leu, but may be other amino acids including Pro although not Arg or Lys, and Yaa may be Pro. Amino acid amides and methyl esters are also readily hydrolyzed, but rates on arylamides are exceedingly low.. The enzyme catalyses Release of an N-terminal amino acid, preferentially leucine, but not glutamic or aspartic acids.. In terms of biological role, presumably involved in the processing and regular turnover of intracellular proteins. Catalyzes the removal of unsubstituted N-terminal amino acids from various peptides. The polypeptide is Probable cytosol aminopeptidase (Rhodococcus opacus (strain B4)).